A 544-amino-acid chain; its full sequence is Cytochrome P450 2U1 (544 aa).

Transmembrane regions (helical) follow at residues 30–50 (LDPSGGALLLCGLVALLGWSW), 113–133 (VYGSIFSFFIGHYLVVVLSDF), 261–281 (ICLNSQVLLVNICPWLYYLPF), and 342–362 (LFYIIGDLFIAGTDTTTNSLL). Cysteine 490 provides a ligand contact to heme. The chain crosses the membrane as a helical span at residues 495–515 (LAKMELFLMFVSLMQSFAFAL).

This sequence belongs to the cytochrome P450 family. It depends on heme as a cofactor. Widely expressed with stronger expression in thymus, heart and cerebellum.

It localises to the endoplasmic reticulum membrane. The protein localises to the microsome membrane. Its subcellular location is the mitochondrion inner membrane. It catalyses the reaction an omega-methyl-long-chain fatty acid + reduced [NADPH--hemoprotein reductase] + O2 = an omega-hydroxy-long-chain fatty acid + oxidized [NADPH--hemoprotein reductase] + H2O + H(+). The catalysed reaction is (5Z,8Z,11Z,14Z)-eicosatetraenoate + reduced [NADPH--hemoprotein reductase] + O2 = 19-hydroxy-(5Z,8Z,11Z,14Z)-eicosatetraenoate + oxidized [NADPH--hemoprotein reductase] + H2O + H(+). The enzyme catalyses (5Z,8Z,11Z,14Z)-eicosatetraenoate + reduced [NADPH--hemoprotein reductase] + O2 = 20-hydroxy-(5Z,8Z,11Z,14Z)-eicosatetraenoate + oxidized [NADPH--hemoprotein reductase] + H2O + H(+). It carries out the reaction N-[(5Z,8Z,11Z,14Z)-eicosatetraenoyl]-serotonin + reduced [NADPH--hemoprotein reductase] + O2 = 2-oxo-N-[(5Z,8Z,11Z,14Z)-eicosatetraenoyl]-serotonin + oxidized [NADPH--hemoprotein reductase] + H2O + H(+). It functions in the pathway lipid metabolism; arachidonate metabolism. A cytochrome P450 monooxygenase involved in the metabolism of arachidonic acid and its conjugates. Mechanistically, uses molecular oxygen inserting one oxygen atom into a substrate, and reducing the second into a water molecule, with two electrons provided by NADPH via cytochrome P450 reductase (CPR; NADPH-ferrihemoprotein reductase). Acts as an omega and omega-1 hydroxylase for arachidonic acid and possibly for other long chain fatty acids. May modulate the arachidonic acid signaling pathway and play a role in other fatty acid signaling processes. May down-regulate the biological activities of N-arachidonoyl-serotonin, an endocannabinoid that has anti-nociceptive effects through inhibition of fatty acid amide hydrolase FAAH, TRPV1 receptor and T-type calcium channels. Catalyzes C-2 oxidation of the indole ring of N-arachidonoyl-serotonin forming a less active product 2-oxo-N-arachidonoyl-serotonin. The sequence is that of Cytochrome P450 2U1 from Homo sapiens (Human).